We begin with the raw amino-acid sequence, 840 residues long: OTU domain-containing protein 7B (840 aa).

The tract at residues 49–88 (AGNLSPPFSGGSTCPKTPEKGGSDREPTRPSRPILQRQDD) is disordered. A compositionally biased stretch (basic and acidic residues) spans 65 to 77 (TPEKGGSDREPTR). At serine 100 the chain carries Phosphoserine. The TRAF-binding stretch occupies residues 152–401 (ERDLIEQSML…AVDPGKGWEW (250 aa)). A catalytic region spans residues 167-440 (AGRLNWWVSM…VKWIPLSSDS (274 aa)). One can recognise an OTU domain in the interval 183–365 (LLPLATTGDG…QAHFSALVSM (183 aa)). The segment at 187–193 (ATTGDGN) is regulatory loop. The active site involves aspartate 191. The Nucleophile role is filled by cysteine 194. Histidine 358 serves as the catalytic Proton acceptor. Over residues 440–452 (SQAPLAQPESPTA) the composition is skewed to polar residues. 2 disordered regions span residues 440–592 (SQAP…YSQE) and 653–710 (IMNG…VHCQ). Basic and acidic residues-rich tracts occupy residues 456–471 (DEPR…DKES) and 488–500 (SKRD…KRAD). Phosphoserine is present on residues serine 464, serine 467, and serine 471. The Nuclear localization signal signature appears at 483-498 (RRKEKSKRDREKDKKR). Residues 531–541 (KPGGLGSGSGI) are compositionally biased toward gly residues. Threonine 730 is modified (phosphothreonine). The A20-type zinc finger occupies 793-828 (PPTQTKCKQPNCSFYGHPETNNLCSCCYREELRRRE). Zn(2+)-binding residues include cysteine 799, cysteine 804, cysteine 816, and cysteine 819.

Belongs to the peptidase C64 family. Interacts with TRAF6. Interacts with PARK7, leading to inhibit deubiquitinase activity. Interacts with EGFR, ITCH and NEDD4. Interacts with TRAF3. Interacts with ZAP70 in activated T cells, but not in resting T cells. Phosphorylated by EGFR.

The protein localises to the cytoplasm. Its subcellular location is the nucleus. The catalysed reaction is Thiol-dependent hydrolysis of ester, thioester, amide, peptide and isopeptide bonds formed by the C-terminal Gly of ubiquitin (a 76-residue protein attached to proteins as an intracellular targeting signal).. Deubiquitinase activity is inhibited following interaction with PARK7. Negative regulator of the non-canonical NF-kappa-B pathway that acts by mediating deubiquitination of TRAF3, an inhibitor of the NF-kappa-B pathway, thereby acting as a negative regulator of B-cell responses. In response to non-canonical NF-kappa-B stimuli, deubiquitinates 'Lys-48'-linked polyubiquitin chains of TRAF3, preventing TRAF3 proteolysis and over-activation of non-canonical NF-kappa-B. Negatively regulates mucosal immunity against infections. Deubiquitinates ZAP70, and thereby regulates T cell receptor (TCR) signaling that leads to the activation of NF-kappa-B. Plays a role in T cell homeostasis and is required for normal T cell responses, including production of IFNG and IL2. Mediates deubiquitination of EGFR. Has deubiquitinating activity toward 'Lys-11', 'Lys-48' and 'Lys-63'-linked polyubiquitin chains. Has a much higher catalytic rate with 'Lys-11'-linked polyubiquitin chains (in vitro); however the physiological significance of these data are unsure. Hydrolyzes both linear and branched forms of polyubiquitin. Acts as a regulator of mTORC1 and mTORC2 assembly by mediating 'Lys-63'-linked deubiquitination of MLST8, thereby promoting assembly of the mTORC2 complex, while inibiting formation of the mTORC1 complex. The polypeptide is OTU domain-containing protein 7B (Otud7b) (Mus musculus (Mouse)).